Consider the following 358-residue polypeptide: Protein-arginine kinase (358 aa).

The Phosphagen kinase C-terminal domain maps to 23–250; the sequence is VWPVTTFSLA…SKLSVAEVAA (228 aa). ATP-binding positions include 26–30, 174–178, and 203–208; these read VTTFS, KSQCF, and SSLLLG.

It belongs to the ATP:guanido phosphotransferase family.

It carries out the reaction L-arginyl-[protein] + ATP = N(omega)-phospho-L-arginyl-[protein] + ADP + H(+). In terms of biological role, catalyzes the specific phosphorylation of arginine residues in proteins. This is Protein-arginine kinase from Chlamydia pneumoniae (Chlamydophila pneumoniae).